Here is a 408-residue protein sequence, read N- to C-terminus: S-adenosylmethionine synthase (408 aa).

Residue His16 participates in ATP binding. Residue Asp18 participates in Mg(2+) binding. Glu44 contacts K(+). L-methionine is bound by residues Glu57 and Gln100. The interval 100–110 (QSPEINQGVSR) is flexible loop. ATP contacts are provided by residues 177–179 (DGK), Asp257, 263–264 (RK), Ala280, and Lys284. Asp257 contacts L-methionine. Lys288 lines the L-methionine pocket.

This sequence belongs to the AdoMet synthase family. In terms of assembly, homotetramer; dimer of dimers. The cofactor is Mg(2+). K(+) is required as a cofactor.

Its subcellular location is the cytoplasm. It carries out the reaction L-methionine + ATP + H2O = S-adenosyl-L-methionine + phosphate + diphosphate. The protein operates within amino-acid biosynthesis; S-adenosyl-L-methionine biosynthesis; S-adenosyl-L-methionine from L-methionine: step 1/1. In terms of biological role, catalyzes the formation of S-adenosylmethionine (AdoMet) from methionine and ATP. The overall synthetic reaction is composed of two sequential steps, AdoMet formation and the subsequent tripolyphosphate hydrolysis which occurs prior to release of AdoMet from the enzyme. The polypeptide is S-adenosylmethionine synthase (Bifidobacterium animalis subsp. lactis (strain AD011)).